Reading from the N-terminus, the 719-residue chain is Calpain-12 (719 aa).

The Calpain catalytic domain occupies 45 to 341 (LFRDPYFPAG…FDTVQICSLS (297 aa)). Residues Cys-105, His-259, and Asn-283 contribute to the active site. The interval 342-540 (PEVLGPSPEG…DDVISADLQS (199 aa)) is domain III. Acidic residues predominate over residues 393 to 402 (DEEDDEDEEG). Residues 393-418 (DEEDDEDEEGPWGGWGAAGARGPARG) are disordered. Positions 541 to 719 (LQGPYLPLEL…RQWMEVATFS (179 aa)) are domain IV. The EF-hand domain maps to 620-655 (GYLLEWQAIFNKFDEDTSGTMNSYELRLALNAAGFH). Ca(2+) contacts are provided by Asp-633, Asp-635, Ser-637, Thr-639, and Glu-644.

Belongs to the peptidase C2 family.

Its function is as follows. Calcium-regulated non-lysosomal thiol-protease. The sequence is that of Calpain-12 (CAPN12) from Homo sapiens (Human).